The sequence spans 446 residues: Nuclear distribution protein nudF (446 aa).

Residues 9-41 (QAEELHKSMVAYLSSIKASQSSNTLREELGIGD) enclose the LisH domain. The stretch at 60-86 (TGIARLQRKILDLESKITSLQAELDSV) forms a coiled coil. WD repeat units lie at residues 113–154 (SHRD…RTLK), 156–196 (HMRG…ANIR), 200–240 (GHDH…CVRT), 243–282 (SNSIWFLDVSPSFDGKWLVAGGRDQAVTVWEVSSAEPRAA), 285–345 (GHDN…IKTL), 347–386 (GHDNWIRGLVFHPSGKYLFSVSDDKTIRCWDLSQEGRLVK), 391–430 (AHGHFISCIRWAPPPRNAAAEASETTNGVSKKAPTKPAFQ), and 432–446 (VIATGSADSCVRVFK).

Belongs to the WD repeat LIS1/nudF family. As to quaternary structure, self-associates. Interacts with nudE and dynein.

Its subcellular location is the cytoplasm. The protein resides in the cytoskeleton. It is found in the spindle pole. In terms of biological role, positively regulates the activity of the minus-end directed microtubule motor protein dynein. May enhance dynein-mediated microtubule sliding by targeting dynein to the microtubule plus end. Required for nuclear migration during vegetative growth as well as development. Required for retrograde early endosome (EE) transport from the hyphal tip. Required for localization of dynein to the mitotic spindle poles. Recruits additional proteins to the dynein complex at SPBs. This chain is Nuclear distribution protein nudF, found in Aspergillus terreus (strain NIH 2624 / FGSC A1156).